A 568-amino-acid polypeptide reads, in one-letter code: Involucrin (568 aa).

Disordered regions lie at residues 23 to 499 and 517 to 568; these read CSPA…EKEL and RKKH…HEVQ. Positions 25–36 are enriched in low complexity; it reads PAQTQQEQTKQP. The segment covering 49–77 has biased composition (basic and acidic residues); that stretch reads TQEKGFPKHEEKEANPVKDLPEQESEHHQ. Positions 78 to 88 are enriched in low complexity; that stretch reads QPGPQKQQLQV. Residues 89–106 show a composition bias toward basic and acidic residues; that stretch reads KKPEQELQEQELHSEKQP. Composition is skewed to low complexity over residues 107-121, 133-154, and 172-181; these read QEPQ…QQQR, HQQP…QDVL, and PELPLGQQQK. Residues 193-213 show a composition bias toward basic and acidic residues; the sequence is KQQKLHLVERHQEPQEQELHH. Residues 217 to 232 are compositionally biased toward low complexity; it reads QKQQQPQEQELQLVQH. Basic and acidic residues-rich tracts occupy residues 266–333 and 345–456; these read ESHE…HQET and KPHE…HLGK. A compositionally biased stretch (low complexity) spans 457 to 467; it reads QQEQQIEYEGY. Phosphoserine is present on Ser472. Composition is skewed to basic and acidic residues over residues 478–499, 517–532, and 551–568; these read KQEK…EKEL, RKKH…EKQI, and VKED…HEVQ.

Belongs to the involucrin family. In terms of assembly, directly or indirectly cross-linked to cornifelin (CNFN). Post-translationally, substrate of transglutaminase. Specific glutamines or lysines are cross-linked to keratins, desmoplakin and to inter involucrin molecules. Keratinocytes of epidermis and other stratified squamous epithelia.

It is found in the cytoplasm. Part of the insoluble cornified cell envelope (CE) of stratified squamous epithelia. The sequence is that of Involucrin (Ivl) from Rattus norvegicus (Rat).